The sequence spans 117 residues: Large ribosomal subunit protein uL18 (117 aa).

It belongs to the universal ribosomal protein uL18 family. Part of the 50S ribosomal subunit; part of the 5S rRNA/L5/L18/L25 subcomplex. Contacts the 5S and 23S rRNAs.

In terms of biological role, this is one of the proteins that bind and probably mediate the attachment of the 5S RNA into the large ribosomal subunit, where it forms part of the central protuberance. The polypeptide is Large ribosomal subunit protein uL18 (Serratia proteamaculans (strain 568)).